Consider the following 137-residue polypeptide: Small ribosomal subunit protein bS6 (137 aa).

The tract at residues 96–137 (ITEASPMAKAKDERDTRRSSEERAPRAEATEEVKESAENTAE) is disordered. Basic and acidic residues predominate over residues 104–137 (KAKDERDTRRSSEERAPRAEATEEVKESAENTAE).

It belongs to the bacterial ribosomal protein bS6 family.

Binds together with bS18 to 16S ribosomal RNA. This chain is Small ribosomal subunit protein bS6, found in Shewanella piezotolerans (strain WP3 / JCM 13877).